A 217-amino-acid chain; its full sequence is Small ribosomal subunit protein uS3 (217 aa).

A KH type-2 domain is found at 40–110; it reads IRDLINKGFN…EVYINIHEVR (71 aa).

Belongs to the universal ribosomal protein uS3 family. As to quaternary structure, part of the 30S ribosomal subunit. Forms a tight complex with proteins S10 and S14.

Functionally, binds the lower part of the 30S subunit head. Binds mRNA in the 70S ribosome, positioning it for translation. The protein is Small ribosomal subunit protein uS3 of Rickettsia africae (strain ESF-5).